Reading from the N-terminus, the 336-residue chain is uncharacterized protein (336 aa).

This is an uncharacterized protein from Mycoplasma capricolum subsp. capricolum (strain California kid / ATCC 27343 / NCTC 10154).